Consider the following 137-residue polypeptide: Structural protein A137R (137 aa).

The protein belongs to the asfivirus A137R family. Interacts with host TBK1.

The protein localises to the virion. Its subcellular location is the host cytoplasm. In terms of biological role, plays a role in the inhibition of the host innate immune response. Mechanistically, promotes the autophagy-mediated lysosomal degradation of host TBK1 and affects IRF3 nuclear translocation to block type I IFN production. The protein is Structural protein A137R of Ornithodoros (relapsing fever ticks).